Consider the following 227-residue polypeptide: Cytochrome c oxidase subunit 2 (227 aa).

Residues 1 to 14 (MAYPFQLGFQDATS) lie on the Mitochondrial intermembrane side of the membrane. A helical membrane pass occupies residues 15-45 (PIMEELLHFHDHTLMIVFLISSLVLYIITLM). Residues 46-59 (LTTKLTHTSTMDAQ) lie on the Mitochondrial matrix side of the membrane. A helical membrane pass occupies residues 60–87 (EVETVWTILPAIILILIALPSLRILYMM). Over 88–227 (DEVNNPSLTV…FFEKWSASML (140 aa)) the chain is Mitochondrial intermembrane. 6 residues coordinate Cu cation: H161, C196, E198, C200, H204, and M207. E198 lines the Mg(2+) pocket.

The protein belongs to the cytochrome c oxidase subunit 2 family. In terms of assembly, component of the cytochrome c oxidase (complex IV, CIV), a multisubunit enzyme composed of 14 subunits. The complex is composed of a catalytic core of 3 subunits MT-CO1, MT-CO2 and MT-CO3, encoded in the mitochondrial DNA, and 11 supernumerary subunits COX4I, COX5A, COX5B, COX6A, COX6B, COX6C, COX7A, COX7B, COX7C, COX8 and NDUFA4, which are encoded in the nuclear genome. The complex exists as a monomer or a dimer and forms supercomplexes (SCs) in the inner mitochondrial membrane with NADH-ubiquinone oxidoreductase (complex I, CI) and ubiquinol-cytochrome c oxidoreductase (cytochrome b-c1 complex, complex III, CIII), resulting in different assemblies (supercomplex SCI(1)III(2)IV(1) and megacomplex MCI(2)III(2)IV(2)). Found in a complex with TMEM177, COA6, COX18, COX20, SCO1 and SCO2. Interacts with TMEM177 in a COX20-dependent manner. Interacts with COX20. Interacts with COX16. Cu cation is required as a cofactor.

It is found in the mitochondrion inner membrane. It catalyses the reaction 4 Fe(II)-[cytochrome c] + O2 + 8 H(+)(in) = 4 Fe(III)-[cytochrome c] + 2 H2O + 4 H(+)(out). Component of the cytochrome c oxidase, the last enzyme in the mitochondrial electron transport chain which drives oxidative phosphorylation. The respiratory chain contains 3 multisubunit complexes succinate dehydrogenase (complex II, CII), ubiquinol-cytochrome c oxidoreductase (cytochrome b-c1 complex, complex III, CIII) and cytochrome c oxidase (complex IV, CIV), that cooperate to transfer electrons derived from NADH and succinate to molecular oxygen, creating an electrochemical gradient over the inner membrane that drives transmembrane transport and the ATP synthase. Cytochrome c oxidase is the component of the respiratory chain that catalyzes the reduction of oxygen to water. Electrons originating from reduced cytochrome c in the intermembrane space (IMS) are transferred via the dinuclear copper A center (CU(A)) of subunit 2 and heme A of subunit 1 to the active site in subunit 1, a binuclear center (BNC) formed by heme A3 and copper B (CU(B)). The BNC reduces molecular oxygen to 2 water molecules using 4 electrons from cytochrome c in the IMS and 4 protons from the mitochondrial matrix. The protein is Cytochrome c oxidase subunit 2 (MT-CO2) of Balaenoptera musculus (Blue whale).